The primary structure comprises 357 residues: S-adenosylmethionine:tRNA ribosyltransferase-isomerase (357 aa).

It belongs to the QueA family. As to quaternary structure, monomer.

It localises to the cytoplasm. It catalyses the reaction 7-aminomethyl-7-carbaguanosine(34) in tRNA + S-adenosyl-L-methionine = epoxyqueuosine(34) in tRNA + adenine + L-methionine + 2 H(+). Its pathway is tRNA modification; tRNA-queuosine biosynthesis. Functionally, transfers and isomerizes the ribose moiety from AdoMet to the 7-aminomethyl group of 7-deazaguanine (preQ1-tRNA) to give epoxyqueuosine (oQ-tRNA). The polypeptide is S-adenosylmethionine:tRNA ribosyltransferase-isomerase (Proteus mirabilis (strain HI4320)).